Here is a 183-residue protein sequence, read N- to C-terminus: NADH-quinone oxidoreductase subunit B (183 aa).

C60, C61, C125, and C154 together coordinate [4Fe-4S] cluster.

This sequence belongs to the complex I 20 kDa subunit family. NDH-1 is composed of 14 different subunits. Subunits NuoB, C, D, E, F, and G constitute the peripheral sector of the complex. [4Fe-4S] cluster is required as a cofactor.

It localises to the cell inner membrane. It carries out the reaction a quinone + NADH + 5 H(+)(in) = a quinol + NAD(+) + 4 H(+)(out). NDH-1 shuttles electrons from NADH, via FMN and iron-sulfur (Fe-S) centers, to quinones in the respiratory chain. The immediate electron acceptor for the enzyme in this species is believed to be ubiquinone. Couples the redox reaction to proton translocation (for every two electrons transferred, four hydrogen ions are translocated across the cytoplasmic membrane), and thus conserves the redox energy in a proton gradient. This is NADH-quinone oxidoreductase subunit B from Desulfovibrio desulfuricans (strain ATCC 27774 / DSM 6949 / MB).